We begin with the raw amino-acid sequence, 500 residues long: Prostacyclin synthase (500 aa).

The chain crosses the membrane as a helical span at residues 1–20 (MSWAVVFGLLAALLLLLLLT). Substrate-binding positions include Arg-106, Leu-112, Asn-287, 358 to 359 (TR), and Arg-382. Position 441 (Cys-441) interacts with heme.

This sequence belongs to the cytochrome P450 family. It depends on heme as a cofactor.

The protein resides in the endoplasmic reticulum membrane. The enzyme catalyses prostaglandin H2 = prostaglandin I2. It carries out the reaction a hydroperoxyeicosatetraenoate = an oxoeicosatetraenoate + H2O. It catalyses the reaction (15S)-hydroperoxy-(5Z,8Z,11Z,13E)-eicosatetraenoate = 15-oxo-(5Z,8Z,11Z,13E)-eicosatetraenoate + H2O. The catalysed reaction is (15S)-hydroperoxy-(5Z,8Z,11Z,13E)-eicosatetraenoate + AH2 = (15S)-hydroxy-(5Z,8Z,11Z,13E)-eicosatetraenoate + A + H2O. Functionally, catalyzes the biosynthesis and metabolism of eicosanoids. Catalyzes the isomerization of prostaglandin H2 to prostacyclin (= prostaglandin I2), a potent mediator of vasodilation and inhibitor of platelet aggregation. Additionally, displays dehydratase activity, toward hydroperoxyeicosatetraenoates (HPETEs), especially toward (15S)-hydroperoxy-(5Z,8Z,11Z,13E)-eicosatetraenoate (15(S)-HPETE). The chain is Prostacyclin synthase (PTGIS) from Bos taurus (Bovine).